The chain runs to 102 residues: Small ribosomal subunit protein uS10 (102 aa).

This sequence belongs to the universal ribosomal protein uS10 family. Part of the 30S ribosomal subunit.

Involved in the binding of tRNA to the ribosomes. In Paramagnetospirillum magneticum (strain ATCC 700264 / AMB-1) (Magnetospirillum magneticum), this protein is Small ribosomal subunit protein uS10.